A 447-amino-acid chain; its full sequence is Neuraminidase (447 aa).

The Intravirion portion of the chain corresponds to 1–6 (MNPNQK). Residues 7–27 (IITIGSICMGIGIISLILQIG) form a helical membrane-spanning segment. Residues 11–33 (GSICMGIGIISLILQIGNIISMW) form an involved in apical transport and lipid raft association region. The Virion surface portion of the chain corresponds to 28 to 447 (NIISMWVSHS…GAELPFTIDK (420 aa)). A hypervariable stalk region region spans residues 36–68 (HSIQTENQNHHEACNPSIAGQDAASVALAGNSS). Residue asparagine 66 is glycosylated (N-linked (GlcNAc...) asparagine; by host). The head of neuraminidase stretch occupies residues 69 to 447 (LCPISGWAIY…GAELPFTIDK (379 aa)). Cystine bridges form between cysteine 70-cysteine 395, cysteine 102-cysteine 107, cysteine 162-cysteine 209, cysteine 211-cysteine 216, cysteine 257-cysteine 270, cysteine 259-cysteine 268, cysteine 296-cysteine 313, and cysteine 399-cysteine 424. Arginine 96 is a substrate binding site. Asparagine 124 is a glycosylation site (N-linked (GlcNAc...) asparagine; by host). Aspartate 129 serves as the catalytic Proton donor/acceptor. Residue arginine 130 participates in substrate binding. The N-linked (GlcNAc...) asparagine; by host glycan is linked to asparagine 213. 255–256 (EE) contributes to the substrate binding site. Substrate is bound at residue arginine 271. Ca(2+) contacts are provided by aspartate 272, glycine 276, and aspartate 302. Residue arginine 346 participates in substrate binding. Catalysis depends on tyrosine 380, which acts as the Nucleophile.

It belongs to the glycosyl hydrolase 34 family. In terms of assembly, homotetramer. It depends on Ca(2+) as a cofactor. Post-translationally, N-glycosylated.

It is found in the virion membrane. It localises to the host apical cell membrane. The catalysed reaction is Hydrolysis of alpha-(2-&gt;3)-, alpha-(2-&gt;6)-, alpha-(2-&gt;8)- glycosidic linkages of terminal sialic acid residues in oligosaccharides, glycoproteins, glycolipids, colominic acid and synthetic substrates.. Its activity is regulated as follows. Inhibited by the neuraminidase inhibitors zanamivir (Relenza) and oseltamivir (Tamiflu). These drugs interfere with the release of progeny virus from infected cells and are effective against all influenza strains. Resistance to neuraminidase inhibitors is quite rare. Its function is as follows. Catalyzes the removal of terminal sialic acid residues from viral and cellular glycoconjugates. Cleaves off the terminal sialic acids on the glycosylated HA during virus budding to facilitate virus release. Additionally helps virus spread through the circulation by further removing sialic acids from the cell surface. These cleavages prevent self-aggregation and ensure the efficient spread of the progeny virus from cell to cell. Otherwise, infection would be limited to one round of replication. Described as a receptor-destroying enzyme because it cleaves a terminal sialic acid from the cellular receptors. May facilitate viral invasion of the upper airways by cleaving the sialic acid moieties on the mucin of the airway epithelial cells. Likely to plays a role in the budding process through its association with lipid rafts during intracellular transport. May additionally display a raft-association independent effect on budding. Plays a role in the determination of host range restriction on replication and virulence. Sialidase activity in late endosome/lysosome traffic seems to enhance virus replication. The protein is Neuraminidase of Aves.